Here is a 475-residue protein sequence, read N- to C-terminus: Glutamate--tRNA ligase (475 aa).

A 'HIGH' region motif is present at residues 11-21 (PSPTGFLHIGG). The short motif at 240 to 244 (KLSKR) is the 'KMSKS' region element. Lysine 243 serves as a coordination point for ATP.

The protein belongs to the class-I aminoacyl-tRNA synthetase family. Glutamate--tRNA ligase type 1 subfamily. As to quaternary structure, monomer.

Its subcellular location is the cytoplasm. The enzyme catalyses tRNA(Glu) + L-glutamate + ATP = L-glutamyl-tRNA(Glu) + AMP + diphosphate. Functionally, catalyzes the attachment of glutamate to tRNA(Glu) in a two-step reaction: glutamate is first activated by ATP to form Glu-AMP and then transferred to the acceptor end of tRNA(Glu). The polypeptide is Glutamate--tRNA ligase (Bradyrhizobium diazoefficiens (strain JCM 10833 / BCRC 13528 / IAM 13628 / NBRC 14792 / USDA 110)).